The chain runs to 392 residues: Phospho-N-acetylmuramoyl-pentapeptide-transferase (392 aa).

The next 10 membrane-spanning stretches (helical) occupy residues 24-44, 76-96, 100-120, 137-157, 193-213, 225-245, 262-282, 289-309, 314-334, and 369-389; these read YLTFRAVMAAMTALLIGLLAG, TMGGVLILGAIAISTLLWFDL, FVWVVLAVTLGFGAIGWVDDW, YFWQSVIGIVAALYLVFCISE, VSYPLGVLGFVILTYLVIVGS, GLAIMPVVMVGASLGVFAYVT, AGELLIFCSAMAGAGLAFLWF, VFMGDVGALALGGALGTIAII, IVLAIMGGIFVVEALSVMLQV, and QVVVRFWIITMLLCLIGLTTL.

This sequence belongs to the glycosyltransferase 4 family. MraY subfamily. Mg(2+) is required as a cofactor.

The protein resides in the cell inner membrane. The catalysed reaction is UDP-N-acetyl-alpha-D-muramoyl-L-alanyl-gamma-D-glutamyl-meso-2,6-diaminopimeloyl-D-alanyl-D-alanine + di-trans,octa-cis-undecaprenyl phosphate = di-trans,octa-cis-undecaprenyl diphospho-N-acetyl-alpha-D-muramoyl-L-alanyl-D-glutamyl-meso-2,6-diaminopimeloyl-D-alanyl-D-alanine + UMP. It functions in the pathway cell wall biogenesis; peptidoglycan biosynthesis. Its function is as follows. Catalyzes the initial step of the lipid cycle reactions in the biosynthesis of the cell wall peptidoglycan: transfers peptidoglycan precursor phospho-MurNAc-pentapeptide from UDP-MurNAc-pentapeptide onto the lipid carrier undecaprenyl phosphate, yielding undecaprenyl-pyrophosphoryl-MurNAc-pentapeptide, known as lipid I. The chain is Phospho-N-acetylmuramoyl-pentapeptide-transferase from Paracidovorax citrulli (strain AAC00-1) (Acidovorax citrulli).